Reading from the N-terminus, the 882-residue chain is Translation initiation factor IF-2 (882 aa).

A disordered region spans residues 57 to 211 (YIPANKTKDK…KDKSKPKVAT (155 aa)). Residues 104-115 (TTSEKQKDKGEQ) are compositionally biased toward basic and acidic residues. A compositionally biased stretch (basic residues) spans 199–211 (RHKKDKSKPKVAT). A tr-type G domain is found at 381-550 (ERPPVVTIMG…LIQAEVLELK (170 aa)). A G1 region spans residues 390 to 397 (GHVDHGKT). Position 390-397 (390-397 (GHVDHGKT)) interacts with GTP. Residues 415–419 (GITQH) form a G2 region. The segment at 436 to 439 (DTPG) is G3. Residues 436–440 (DTPGH) and 490–493 (NKMD) each bind GTP. The interval 490 to 493 (NKMD) is G4. The segment at 526 to 528 (SAK) is G5.

This sequence belongs to the TRAFAC class translation factor GTPase superfamily. Classic translation factor GTPase family. IF-2 subfamily.

It localises to the cytoplasm. Functionally, one of the essential components for the initiation of protein synthesis. Protects formylmethionyl-tRNA from spontaneous hydrolysis and promotes its binding to the 30S ribosomal subunits. Also involved in the hydrolysis of GTP during the formation of the 70S ribosomal complex. In Helicobacter hepaticus (strain ATCC 51449 / 3B1), this protein is Translation initiation factor IF-2.